Consider the following 513-residue polypeptide: Cytochrome P450 86A1 (513 aa).

Residues 7-27 (ILTGYAVAALSVYALWFYFLS) form a helical membrane-spanning segment. Residue cysteine 456 coordinates heme.

Belongs to the cytochrome P450 family. The cofactor is heme. As to expression, expressed in roots.

It is found in the membrane. The catalysed reaction is an omega-methyl-long-chain fatty acid + reduced [NADPH--hemoprotein reductase] + O2 = an omega-hydroxy-long-chain fatty acid + oxidized [NADPH--hemoprotein reductase] + H2O + H(+). Catalyzes the omega-hydroxylation of various fatty acids (FA). Acts on saturated and unsaturated fatty acids with chain lengths from C12 to C18 but not on hexadecane. This Arabidopsis thaliana (Mouse-ear cress) protein is Cytochrome P450 86A1 (CYP86A1).